Reading from the N-terminus, the 628-residue chain is tRNA uridine 5-carboxymethylaminomethyl modification enzyme MnmG (628 aa).

FAD is bound at residue 13–18; the sequence is GAGHAG. 273–287 is an NAD(+) binding site; that stretch reads GPRYCPSIEDKIVRF.

Belongs to the MnmG family. Homodimer. Heterotetramer of two MnmE and two MnmG subunits. Requires FAD as cofactor.

It localises to the cytoplasm. NAD-binding protein involved in the addition of a carboxymethylaminomethyl (cmnm) group at the wobble position (U34) of certain tRNAs, forming tRNA-cmnm(5)s(2)U34. This is tRNA uridine 5-carboxymethylaminomethyl modification enzyme MnmG from Buchnera aphidicola subsp. Acyrthosiphon pisum (strain APS) (Acyrthosiphon pisum symbiotic bacterium).